Consider the following 257-residue polypeptide: Geranylgeranylglyceryl phosphate synthase (257 aa).

Residues aspartate 27 and threonine 57 each contribute to the Mg(2+) site. Residues tyrosine 175–glycine 181, glycine 207–glycine 208, and glycine 229–asparagine 230 contribute to the sn-glycerol 1-phosphate site.

It belongs to the GGGP/HepGP synthase family. Group II subfamily. The cofactor is Mg(2+).

It is found in the cytoplasm. The enzyme catalyses sn-glycerol 1-phosphate + (2E,6E,10E)-geranylgeranyl diphosphate = sn-3-O-(geranylgeranyl)glycerol 1-phosphate + diphosphate. The protein operates within membrane lipid metabolism; glycerophospholipid metabolism. Prenyltransferase that catalyzes the transfer of the geranylgeranyl moiety of geranylgeranyl diphosphate (GGPP) to the C3 hydroxyl of sn-glycerol-1-phosphate (G1P). This reaction is the first ether-bond-formation step in the biosynthesis of archaeal membrane lipids. The chain is Geranylgeranylglyceryl phosphate synthase from Sulfolobus acidocaldarius (strain ATCC 33909 / DSM 639 / JCM 8929 / NBRC 15157 / NCIMB 11770).